Here is a 125-residue protein sequence, read N- to C-terminus: Oxytocin-neurophysin 1 (125 aa).

The N-terminal stretch at 1–19 (MAGPSLACCLLGLLALTSA) is a signal peptide. Residues cysteine 20 and cysteine 25 are joined by a disulfide bond. Residue glycine 28 is modified to Glycine amide. Intrachain disulfides connect cysteine 41/cysteine 85, cysteine 44/cysteine 58, cysteine 52/cysteine 75, cysteine 59/cysteine 65, cysteine 92/cysteine 104, cysteine 98/cysteine 116, and cysteine 105/cysteine 110.

It belongs to the vasopressin/oxytocin family. As to quaternary structure, interacts with oxytocin receptor (Ki=1.5 nM). Interacts with vasopressin V1aR/AVPR1A (Ki=37 nM), V1bR/AVPR1B (Ki=222 nM), and V2R/AVPR2 receptors (Ki=823 nM).

Neurophysin 1 specifically binds oxytocin. In terms of biological role, oxytocin causes contraction of the smooth muscle of the uterus and of the mammary gland. Acts by binding to oxytocin receptor (OXTR). The protein is Oxytocin-neurophysin 1 (OXT) of Sus scrofa (Pig).